The sequence spans 137 residues: Basic phospholipase A2 homolog APL-K49 (137 aa).

Positions 1 to 16 are cleaved as a signal peptide; it reads MRTLWIVALLLVGVEG. 7 disulfide bridges follow: C42–C131, C44–C60, C59–C111, C65–C137, C66–C104, C73–C97, and C91–C102. Residues 121-133 are important for membrane-damaging activities in eukaryotes and bacteria; heparin-binding; it reads KKYKAYFKLKCKK.

It belongs to the phospholipase A2 family. Group II subfamily. K49 sub-subfamily. As to quaternary structure, monomer. Expressed by the venom gland.

It is found in the secreted. In terms of biological role, snake venom phospholipase A2 (PLA2) that lacks enzymatic activity. Does not show antibacterial activity. Is myotoxic and displays edema-inducing activities. A model of myotoxic mechanism has been proposed: an apo Lys49-PLA2 is activated by the entrance of a hydrophobic molecule (e.g. fatty acid) at the hydrophobic channel of the protein leading to a reorientation of a monomer. This reorientation causes a transition between 'inactive' to 'active' states, causing alignment of C-terminal and membrane-docking sites (MDoS) side-by-side and putting the membrane-disruption sites (MDiS) in the same plane, exposed to solvent and in a symmetric position for both monomers. The MDoS region stabilizes the toxin on membrane by the interaction of charged residues with phospholipid head groups. Subsequently, the MDiS region destabilizes the membrane with penetration of hydrophobic residues. This insertion causes a disorganization of the membrane, allowing an uncontrolled influx of ions (i.e. calcium and sodium), and eventually triggering irreversible intracellular alterations and cell death. The protein is Basic phospholipase A2 homolog APL-K49 of Agkistrodon piscivorus leucostoma (Western cottonmouth).